We begin with the raw amino-acid sequence, 31 residues long: Chassatide C6 (31 aa).

The segment at residues 1–31 (GVIPCGESCVFIPCISSVIGCSCKNKVCYRN) is a cross-link (cyclopeptide (Gly-Asn)). Disulfide bonds link cysteine 5–cysteine 21, cysteine 9–cysteine 23, and cysteine 14–cysteine 28.

This is a cyclic peptide. Expressed in fruit, pedicel, root and stem but not in leaf (at protein level).

In terms of biological role, probably participates in a plant defense mechanism. The protein is Chassatide C6 of Chassalia chartacea (Chassalia curviflora).